The sequence spans 218 residues: Putative glutamine transport system permease protein GlnP (218 aa).

The ABC transmembrane type-1 domain maps to threonine 19–alanine 208. 4 helical membrane-spanning segments follow: residues tyrosine 25 to valine 45, phenylalanine 57 to proline 79, phenylalanine 86 to isoleucine 108, and phenylalanine 187 to isoleucine 207.

The protein belongs to the binding-protein-dependent transport system permease family. HisMQ subfamily.

It localises to the cell inner membrane. Functionally, part of the binding-protein-dependent transport system for glutamine; probably responsible for the translocation of the substrate across the membrane. The protein is Putative glutamine transport system permease protein GlnP (glnP) of Rickettsia bellii (strain RML369-C).